The sequence spans 919 residues: Kinesin-like protein KIN-UA (919 aa).

The interval 1-68 is disordered; it reads MSTTSGTGGV…SGGGGDAGVP (68 aa). Residues 15-51 are compositionally biased toward low complexity; sequence GTQRSSLRTQSSASTSSGGQKASVKSKSVLRKSSPAA. Residues 52–66 are compositionally biased toward gly residues; that stretch reads LGGGSSKSGGGGDAG. In terms of domain architecture, Kinesin motor spans 70 to 412; that stretch reads RVRVAVRLRP…IMFGQRAMKV (343 aa). 155 to 162 serves as a coordination point for ATP; sequence GQTGTGKT. Residues 286–305 form a disordered region; the sequence is TRDGLSSESNGNSHMTKSLK. Positions 291 to 301 are enriched in polar residues; the sequence is SSESNGNSHMT. A D-BOX motif is present at residues 382-390; it reads RTSLVITIG. Coiled coils occupy residues 428–492 and 530–621; these read SRRL…SIKK and ALEE…LEQH. 4 ARM repeats span residues 650 to 689, 691 to 731, 733 to 773, and 775 to 814; these read KPPVARLFEQVGLQKILSLLEAEDADVRIHAVKVVANLAA, EANQ…NLAM, ETNQ…NLCG, and DKLQTKLRSEGGIAALLGMVRCGHPDVLAQVARGIANFAK.

Belongs to the TRAFAC class myosin-kinesin ATPase superfamily. Kinesin family. Ungrouped subfamily. In terms of assembly, interacts (via C-terminus) with NEK5. As to expression, expressed in leaves, guard cells, trichomes, vascular tissues, stele of the root tip region and columella cells. Highest expression detected in guard cells.

The protein resides in the cytoplasm. The protein localises to the cytoskeleton. The chain is Kinesin-like protein KIN-UA from Arabidopsis thaliana (Mouse-ear cress).